The primary structure comprises 364 residues: Putative [LysW]-aminoadipate semialdehyde/glutamate semialdehyde transaminase (364 aa).

Pyridoxal 5'-phosphate contacts are provided by residues 90-91 (GT) and phenylalanine 117. Residue arginine 120 participates in substrate binding. Residue 202–205 (DEVQ) participates in pyridoxal 5'-phosphate binding. At lysine 230 the chain carries N6-(pyridoxal phosphate)lysine. Serine 254 is a binding site for substrate. Threonine 255 contributes to the pyridoxal 5'-phosphate binding site.

This sequence belongs to the class-III pyridoxal-phosphate-dependent aminotransferase family. LysJ subfamily. As to quaternary structure, homodimer. It depends on pyridoxal 5'-phosphate as a cofactor.

It localises to the cytoplasm. It carries out the reaction [amino-group carrier protein]-C-terminal-gamma-(L-lysyl)-L-glutamate + 2-oxoglutarate = [amino-group carrier protein]-C-terminal-N-(1-carboxy-5-oxopentan-1-yl)-L-glutamine + L-glutamate. It catalyses the reaction [amino-group carrier protein]-C-terminal-gamma-(L-ornithyl)-L-glutamate + 2-oxoglutarate = [amino-group carrier protein]-C-terminal-gamma-(L-glutamyl-5-semialdehyde)-L-glutamate + L-glutamate. It functions in the pathway amino-acid biosynthesis; L-lysine biosynthesis via AAA pathway; L-lysine from L-alpha-aminoadipate (Thermus route): step 4/5. Its pathway is amino-acid biosynthesis; L-arginine biosynthesis. Involved in both the arginine and lysine biosynthetic pathways. The chain is Putative [LysW]-aminoadipate semialdehyde/glutamate semialdehyde transaminase from Pyrococcus abyssi (strain GE5 / Orsay).